Here is a 156-residue protein sequence, read N- to C-terminus: Small ribosomal subunit protein uS7 (156 aa).

This sequence belongs to the universal ribosomal protein uS7 family. Part of the 30S ribosomal subunit. Contacts proteins S9 and S11.

Functionally, one of the primary rRNA binding proteins, it binds directly to 16S rRNA where it nucleates assembly of the head domain of the 30S subunit. Is located at the subunit interface close to the decoding center, probably blocks exit of the E-site tRNA. This chain is Small ribosomal subunit protein uS7, found in Nitrosospira multiformis (strain ATCC 25196 / NCIMB 11849 / C 71).